Reading from the N-terminus, the 998-residue chain is Bifunctional glutamine synthetase adenylyltransferase/adenylyl-removing enzyme (998 aa).

The tract at residues 1–487 is adenylyl removase; sequence MVVTKPATQR…LHAKLFYQPL (487 aa). Residues 492 to 998 form an adenylyl transferase region; the sequence is GPAGLEIRHG…KAVVCKVFGS (507 aa).

The protein belongs to the GlnE family. Mg(2+) is required as a cofactor.

It catalyses the reaction [glutamine synthetase]-O(4)-(5'-adenylyl)-L-tyrosine + phosphate = [glutamine synthetase]-L-tyrosine + ADP. It carries out the reaction [glutamine synthetase]-L-tyrosine + ATP = [glutamine synthetase]-O(4)-(5'-adenylyl)-L-tyrosine + diphosphate. Involved in the regulation of glutamine synthetase GlnA, a key enzyme in the process to assimilate ammonia. When cellular nitrogen levels are high, the C-terminal adenylyl transferase (AT) inactivates GlnA by covalent transfer of an adenylyl group from ATP to specific tyrosine residue of GlnA, thus reducing its activity. Conversely, when nitrogen levels are low, the N-terminal adenylyl removase (AR) activates GlnA by removing the adenylyl group by phosphorolysis, increasing its activity. The regulatory region of GlnE binds the signal transduction protein PII (GlnB) which indicates the nitrogen status of the cell. The polypeptide is Bifunctional glutamine synthetase adenylyltransferase/adenylyl-removing enzyme (Mycolicibacterium paratuberculosis (strain ATCC BAA-968 / K-10) (Mycobacterium paratuberculosis)).